A 214-amino-acid chain; its full sequence is ATP phosphoribosyltransferase (214 aa).

This sequence belongs to the ATP phosphoribosyltransferase family. Short subfamily. As to quaternary structure, heteromultimer composed of HisG and HisZ subunits.

The protein resides in the cytoplasm. The catalysed reaction is 1-(5-phospho-beta-D-ribosyl)-ATP + diphosphate = 5-phospho-alpha-D-ribose 1-diphosphate + ATP. It functions in the pathway amino-acid biosynthesis; L-histidine biosynthesis; L-histidine from 5-phospho-alpha-D-ribose 1-diphosphate: step 1/9. Functionally, catalyzes the condensation of ATP and 5-phosphoribose 1-diphosphate to form N'-(5'-phosphoribosyl)-ATP (PR-ATP). Has a crucial role in the pathway because the rate of histidine biosynthesis seems to be controlled primarily by regulation of HisG enzymatic activity. This Aquifex aeolicus (strain VF5) protein is ATP phosphoribosyltransferase (hisG).